Here is a 230-residue protein sequence, read N- to C-terminus: Large ribosomal subunit protein uL4 (230 aa).

The disordered stretch occupies residues 59–113 (RQGTHATKTRGEVSGGGKKPYRQKGTGRARQGSTRAPQFTGGGTVHGPQPRDYSQ).

It belongs to the universal ribosomal protein uL4 family. Part of the 50S ribosomal subunit.

Its function is as follows. One of the primary rRNA binding proteins, this protein initially binds near the 5'-end of the 23S rRNA. It is important during the early stages of 50S assembly. It makes multiple contacts with different domains of the 23S rRNA in the assembled 50S subunit and ribosome. Functionally, forms part of the polypeptide exit tunnel. In Nocardia farcinica (strain IFM 10152), this protein is Large ribosomal subunit protein uL4.